Here is a 143-residue protein sequence, read N- to C-terminus: Sirohydrochlorin cobaltochelatase (143 aa).

His-9 functions as the Proton acceptor in the catalytic mechanism. A Co(2+)-binding site is contributed by His-9. Residue His-9 coordinates Ni(2+). Substrate-binding positions include Glu-45 and 70-75; that span reads LAHGVH. His-75 lines the Co(2+) pocket. Ni(2+) is bound at residue His-75.

Belongs to the CbiX family. CbiXS subfamily. In terms of assembly, homotetramer; dimer of dimers.

The catalysed reaction is Co-sirohydrochlorin + 2 H(+) = sirohydrochlorin + Co(2+). It catalyses the reaction Ni-sirohydrochlorin + 2 H(+) = sirohydrochlorin + Ni(2+). It participates in cofactor biosynthesis; adenosylcobalamin biosynthesis; cob(II)yrinate a,c-diamide from sirohydrochlorin (anaerobic route): step 1/10. Catalyzes the insertion of Co(2+) into sirohydrochlorin as part of the anaerobic pathway to cobalamin biosynthesis. Involved in the biosynthesis of the unique nickel-containing tetrapyrrole coenzyme F430, the prosthetic group of methyl-coenzyme M reductase (MCR), which plays a key role in methanogenesis and anaerobic methane oxidation. Catalyzes the insertion of Ni(2+) into sirohydrochlorin to yield Ni-sirohydrochlorin. The protein is Sirohydrochlorin cobaltochelatase of Methanopyrus kandleri (strain AV19 / DSM 6324 / JCM 9639 / NBRC 100938).